The primary structure comprises 191 residues: Large ribosomal subunit protein uL5 (191 aa).

Belongs to the universal ribosomal protein uL5 family. In terms of assembly, part of the 50S ribosomal subunit; part of the 5S rRNA/L5/L18/L25 subcomplex. Contacts the 5S rRNA and the P site tRNA. Forms a bridge to the 30S subunit in the 70S ribosome.

Its function is as follows. This is one of the proteins that bind and probably mediate the attachment of the 5S RNA into the large ribosomal subunit, where it forms part of the central protuberance. In the 70S ribosome it contacts protein S13 of the 30S subunit (bridge B1b), connecting the 2 subunits; this bridge is implicated in subunit movement. Contacts the P site tRNA; the 5S rRNA and some of its associated proteins might help stabilize positioning of ribosome-bound tRNAs. The polypeptide is Large ribosomal subunit protein uL5 (Salinibacter ruber (strain DSM 13855 / M31)).